Consider the following 313-residue polypeptide: Protein TIC 22-like, chloroplastic (313 aa).

The N-terminal 96 residues, 1-96 (MNSNIFPPSK…RISDDGGGAR (96 aa)), are a transit peptide targeting the chloroplast.

The protein belongs to the Tic22 family.

It localises to the plastid. It is found in the chloroplast intermembrane space. Involved in protein precursor import into chloroplasts. This Arabidopsis thaliana (Mouse-ear cress) protein is Protein TIC 22-like, chloroplastic (TIC22L).